Reading from the N-terminus, the 197-residue chain is MTSLYLASGSPRRQELLAQLGVTFERIVTGIEEQRQPQESAQQYVVRLAREKARAGVAQTAKDLPVLGADTIVILNGEVLEKPRDAEHAAQMLRKLSGQTHQVMTAVALADSQHILDCLVVTDVTFRTLTDEDIAGYVASDEPLDKAGAYGIQGLGGCFVRKINGSYHAVVGLPLVETYELLSNFNALREKRDKHDG.

The active-site Proton acceptor is the aspartate 70.

The protein belongs to the Maf family. YhdE subfamily. As to quaternary structure, homodimer. Can also form homotetramers. A divalent metal cation serves as cofactor.

It localises to the cytoplasm. It carries out the reaction dTTP + H2O = dTMP + diphosphate + H(+). The catalysed reaction is UTP + H2O = UMP + diphosphate + H(+). It catalyses the reaction 5-methyl-UTP + H2O = 5-methyl-UMP + diphosphate + H(+). The enzyme catalyses psi-UTP + H2O = psi-UMP + diphosphate + H(+). It carries out the reaction 5-methyl-CTP + H2O = 5-methyl-CMP + diphosphate + H(+). Nucleoside triphosphate pyrophosphatase that hydrolyzes dTTP and UTP. Can also hydrolyze TTP and the modified nucleotides 5-methyl-UTP (m(5)UTP), pseudo-UTP and 5-methyl-CTP (m(5)CTP). Has weak activity with CTP. May have a dual role in cell division arrest and in preventing the incorporation of modified nucleotides into cellular nucleic acids. Important in maintenance of cell shape. This Escherichia coli (strain K12) protein is dTTP/UTP pyrophosphatase (yhdE).